The sequence spans 134 residues: Waprin-Phi1 (134 aa).

Positions 1-23 are cleaved as a signal peptide; the sequence is MTLRRGSCPLLLFSLVGLLTTCA. WAP domains are found at residues 36–82 and 83–133; these read VAEK…SCQI and PDEK…TTAR. Cystine bridges form between cysteine 43-cysteine 72, cysteine 55-cysteine 76, cysteine 59-cysteine 71, cysteine 65-cysteine 80, cysteine 90-cysteine 120, cysteine 103-cysteine 124, cysteine 107-cysteine 119, and cysteine 113-cysteine 129.

Belongs to the venom waprin family. Expressed by the venom gland.

The protein resides in the secreted. Functionally, damages membranes of susceptible bacteria. Has no hemolytic activity. Not toxic to mice. Does not inhibit the proteinases elastase and cathepsin G. This chain is Waprin-Phi1, found in Philodryas olfersii (Green snake).